The primary structure comprises 456 residues: Rap guanine nucleotide exchange factor-like 1 (456 aa).

The region spanning 218–454 (EPEDVANHLT…FELSYKLEAN (237 aa)) is the Ras-GEF domain.

Functionally, probable guanine nucleotide exchange factor (GEF). In Pongo pygmaeus (Bornean orangutan), this protein is Rap guanine nucleotide exchange factor-like 1 (RAPGEFL1).